The following is a 516-amino-acid chain: Serine carboxypeptidase-like 49 (516 aa).

Positions 1–22 (MEKLTFLSLLLHFVVFIASTIP) are cleaved as a signal peptide. Positions 23–82 (SSSFLLNDRTFERSNLPSTRAEKLIRELNLFPQQDLNVIDVADLPLTAAEGPGIVERKFV) are excised as a propeptide. Intrachain disulfides connect Cys-139-Cys-379, Cys-307-Cys-322, and Cys-345-Cys-350. N-linked (GlcNAc...) asparagine glycosylation is present at Asn-157. The active site involves Ser-229. The active site involves Asp-417. Cys-420 contacts substrate. His-474 is an active-site residue.

This sequence belongs to the peptidase S10 family. As to expression, expressed in roots, senescent leaves and flowers.

It is found in the secreted. Probable carboxypeptidase. This chain is Serine carboxypeptidase-like 49 (SCPL49), found in Arabidopsis thaliana (Mouse-ear cress).